Consider the following 376-residue polypeptide: 23S rRNA (uracil(747)-C(5))-methyltransferase RlmC (376 aa).

[4Fe-4S] cluster-binding residues include cysteine 3, cysteine 11, cysteine 14, and cysteine 87. Residues glutamine 212, phenylalanine 241, glutamate 262, and asparagine 307 each coordinate S-adenosyl-L-methionine. Cysteine 334 serves as the catalytic Nucleophile.

This sequence belongs to the class I-like SAM-binding methyltransferase superfamily. RNA M5U methyltransferase family. RlmC subfamily.

It carries out the reaction uridine(747) in 23S rRNA + S-adenosyl-L-methionine = 5-methyluridine(747) in 23S rRNA + S-adenosyl-L-homocysteine + H(+). In terms of biological role, catalyzes the formation of 5-methyl-uridine at position 747 (m5U747) in 23S rRNA. The chain is 23S rRNA (uracil(747)-C(5))-methyltransferase RlmC from Yersinia pseudotuberculosis serotype O:1b (strain IP 31758).